Reading from the N-terminus, the 326-residue chain is dTDP-4-dehydro-6-deoxy-D-allose reductase (326 aa).

NAD(+)-binding positions include 15–21 and 129–132; these read GALGFIG and MSSS. The active-site Proton donor/acceptor is Y160. NAD(+) is bound by residues K164 and 187 to 190; that span reads PGNV.

It belongs to the NAD(P)-dependent epimerase/dehydratase family.

The enzyme catalyses dTDP-6-deoxy-alpha-D-allose + NAD(+) = dTDP-4-dehydro-6-deoxy-alpha-D-allose + NADH + H(+). The catalysed reaction is dTDP-6-deoxy-alpha-D-allose + NADP(+) = dTDP-4-dehydro-6-deoxy-alpha-D-allose + NADPH + H(+). Catalyzes the stereospecific reduction of the C-4 keto group of dTDP-4-dehydro-6-deoxy-D-allose, leading to dTDP-6-deoxy-D-allose, an intermediate in the biosynthesis of the mycinose moiety of dihydrochalcomycin (GERI-155) antibiotic. Cannot directly reduce dTDP-4-dehydro-6-deoxyglucose, and thus acts after the epimerization step catalyzed by GerF. The chain is dTDP-4-dehydro-6-deoxy-D-allose reductase (gerKI) from Streptomyces sp.